Here is a 1173-residue protein sequence, read N- to C-terminus: Clustered mitochondria protein homolog (1173 aa).

The span at 1-21 (MSTIDLPTSSLPGSSGDPSGT) shows a compositional bias: low complexity. Residues 1–25 (MSTIDLPTSSLPGSSGDPSGTEMSH) form a disordered region. The region spanning 316-565 (VPHRADLSRT…SLFPLDAQFL (250 aa)) is the Clu domain. A disordered region spans residues 888–910 (KFTGKKGNKKKRNLGKSQNTTNR). The span at 890–901 (TGKKGNKKKRNL) shows a compositional bias: basic residues. A TPR repeat occupies 984-1017 (ARAYCQLAMIYHQLEKKEEAVELARKAVIVCERF).

It belongs to the CLU family. As to quaternary structure, may associate with the eukaryotic translation initiation factor 3 (eIF-3) complex.

The protein localises to the cytoplasm. Its function is as follows. mRNA-binding protein involved in proper cytoplasmic distribution of mitochondria. The polypeptide is Clustered mitochondria protein homolog (Schizosaccharomyces pombe (strain 972 / ATCC 24843) (Fission yeast)).